We begin with the raw amino-acid sequence, 333 residues long: Protoheme IX farnesyltransferase (333 aa).

A run of 8 helical transmembrane segments spans residues 31 to 51 (VMSLVVFTGLTGLLAARAPIH), 52 to 72 (PVLAAIAVLCIAVGAGASGAL), 115 to 135 (MFLGFAVNWLAAGLLAFTIVF), 152 to 172 (IVIGGLAGALPPAIGWAAATG), 178 to 198 (AWLMVAIIFFWTPPHFWALSL), 223 to 243 (KQILLYSLILFPICLSPVLTG), 244 to 264 (LGGPIYLAVSGLGGLVFLLLA), and 303 to 323 (LFAFSILYLFALFAALLGEAV).

This sequence belongs to the UbiA prenyltransferase family. Protoheme IX farnesyltransferase subfamily.

It is found in the cell inner membrane. The enzyme catalyses heme b + (2E,6E)-farnesyl diphosphate + H2O = Fe(II)-heme o + diphosphate. It participates in porphyrin-containing compound metabolism; heme O biosynthesis; heme O from protoheme: step 1/1. Its function is as follows. Converts heme B (protoheme IX) to heme O by substitution of the vinyl group on carbon 2 of heme B porphyrin ring with a hydroxyethyl farnesyl side group. This chain is Protoheme IX farnesyltransferase, found in Caulobacter vibrioides (strain ATCC 19089 / CIP 103742 / CB 15) (Caulobacter crescentus).